We begin with the raw amino-acid sequence, 714 residues long: Fatty acid oxidation complex subunit alpha (714 aa).

An enoyl-CoA hydratase region spans residues 1 to 190 (MEMASVFTLN…KLGLVDDVVP (190 aa)). Residues 306–714 (APLNSVGILG…FWKTTATDLQ (409 aa)) are 3-hydroxyacyl-CoA dehydrogenase.

It in the N-terminal section; belongs to the enoyl-CoA hydratase/isomerase family. In the central section; belongs to the 3-hydroxyacyl-CoA dehydrogenase family. As to quaternary structure, heterotetramer of two alpha chains (FadJ) and two beta chains (FadI).

The protein localises to the cytoplasm. The catalysed reaction is a (3S)-3-hydroxyacyl-CoA = a (2E)-enoyl-CoA + H2O. It carries out the reaction a 4-saturated-(3S)-3-hydroxyacyl-CoA = a (3E)-enoyl-CoA + H2O. It catalyses the reaction a (3S)-3-hydroxyacyl-CoA + NAD(+) = a 3-oxoacyl-CoA + NADH + H(+). The enzyme catalyses (3S)-3-hydroxybutanoyl-CoA = (3R)-3-hydroxybutanoyl-CoA. Its pathway is lipid metabolism; fatty acid beta-oxidation. Its function is as follows. Catalyzes the formation of a hydroxyacyl-CoA by addition of water on enoyl-CoA. Also exhibits 3-hydroxyacyl-CoA epimerase and 3-hydroxyacyl-CoA dehydrogenase activities. In Escherichia coli (strain SE11), this protein is Fatty acid oxidation complex subunit alpha.